The chain runs to 480 residues: Docking protein 1 (480 aa).

Met-1 bears the N-acetylmethionine mark. Residues Gly-3 to Phe-119 enclose the PH domain. Position 48 is a phosphoserine (Ser-48). The region spanning Glu-151–Gly-259 is the IRS-type PTB domain. Low complexity predominate over residues Lys-253 to Gln-262. The segment at Lys-253–Gly-328 is disordered. The span at Thr-265–Gly-276 shows a compositional bias: basic and acidic residues. Phosphoserine occurs at positions 269 and 290. A phosphotyrosine mark is found at Tyr-295, Tyr-336, and Tyr-340. At Tyr-361 the chain carries Phosphotyrosine; by INSR. Tyr-376 is subject to Phosphotyrosine. Residue Tyr-397 is modified to Phosphotyrosine; by INSR. The disordered stretch occupies residues Glu-398 to Thr-480. Position 408 is a phosphotyrosine (Tyr-408). Over residues Val-410–Lys-423 the composition is skewed to pro residues. Ser-415 is subject to Phosphoserine. Positions Ser-432–Thr-445 are enriched in low complexity. Residues Ala-446 to Gly-455 are compositionally biased toward polar residues. Tyr-448 is modified (phosphotyrosine).

The protein belongs to the DOK family. Type A subfamily. In terms of assembly, interacts with RasGAP and INPP5D/SHIP1. Interacts directly with phosphorylated ITGB3. Interacts with SRMS (via the SH2 and SH3 domains). Post-translationally, constitutively tyrosine-phosphorylated. Phosphorylated by TEC. Phosphorylated by LYN. Phosphorylated on tyrosine residues by the insulin receptor kinase. Results in the negative regulation of the insulin signaling pathway. Phosphorylated on tyrosine residues by SRMS.

The protein localises to the cytoplasm. It is found in the nucleus. In terms of biological role, DOK proteins are enzymatically inert adaptor or scaffolding proteins. They provide a docking platform for the assembly of multimolecular signaling complexes. DOK1 appears to be a negative regulator of the insulin signaling pathway. Modulates integrin activation by competing with talin for the same binding site on ITGB3. The polypeptide is Docking protein 1 (Dok1) (Rattus norvegicus (Rat)).